We begin with the raw amino-acid sequence, 376 residues long: Carbamoyl phosphate synthase small chain (376 aa).

Residues 1-187 (MRAFLALEDG…AADGAYAWPG (187 aa)) form a CPSase region. Residues S45, G239, and G241 each contribute to the L-glutamine site. The Glutamine amidotransferase type-1 domain maps to 191 to 376 (RLVVYDYGIK…RGMVREAVGR (186 aa)). C266 functions as the Nucleophile in the catalytic mechanism. Residues L267, Q270, N308, G310, and F311 each coordinate L-glutamine. Active-site residues include H349 and E351.

The protein belongs to the CarA family. Composed of two chains; the small (or glutamine) chain promotes the hydrolysis of glutamine to ammonia, which is used by the large (or ammonia) chain to synthesize carbamoyl phosphate. Tetramer of heterodimers (alpha,beta)4.

It carries out the reaction hydrogencarbonate + L-glutamine + 2 ATP + H2O = carbamoyl phosphate + L-glutamate + 2 ADP + phosphate + 2 H(+). The enzyme catalyses L-glutamine + H2O = L-glutamate + NH4(+). The protein operates within amino-acid biosynthesis; L-arginine biosynthesis; carbamoyl phosphate from bicarbonate: step 1/1. It functions in the pathway pyrimidine metabolism; UMP biosynthesis via de novo pathway; (S)-dihydroorotate from bicarbonate: step 1/3. Functionally, small subunit of the glutamine-dependent carbamoyl phosphate synthetase (CPSase). CPSase catalyzes the formation of carbamoyl phosphate from the ammonia moiety of glutamine, carbonate, and phosphate donated by ATP, constituting the first step of 2 biosynthetic pathways, one leading to arginine and/or urea and the other to pyrimidine nucleotides. The small subunit (glutamine amidotransferase) binds and cleaves glutamine to supply the large subunit with the substrate ammonia. This chain is Carbamoyl phosphate synthase small chain, found in Nitratidesulfovibrio vulgaris (strain DSM 19637 / Miyazaki F) (Desulfovibrio vulgaris).